Consider the following 250-residue polypeptide: Probable aquaporin TIP1-1 (250 aa).

Transmembrane regions (helical) follow at residues 25–44 (AEFISTLIFVFAGQGSGMAF) and 58–77 (LIAAAVAHAFALFVAVSVGA). Residues 85-87 (NPA) carry the NPA 1 motif. The next 3 membrane-spanning stretches (helical) occupy residues 103-121 (GLLYWIAQLLGSTVACFLL), 144-163 (LVLEIVMTFGLVYTVYATAV), and 170-192 (LGTIAPIAIGFIVGANILVGGAF). Positions 198 to 200 (NPA) match the NPA 2 motif. Residues 216–233 (WVYWVGPLIGGGLAGVIY) traverse the membrane as a helical segment.

Belongs to the MIP/aquaporin (TC 1.A.8) family. TIP (TC 1.A.8.10) subfamily. Expressed in roots and leaves.

It is found in the vacuole membrane. Its function is as follows. Aquaporins facilitate the transport of water and small neutral solutes across cell membranes. May be involved in transport from the vacuolar compartment to the cytoplasm. This Oryza sativa subsp. japonica (Rice) protein is Probable aquaporin TIP1-1 (TIP1-1).